We begin with the raw amino-acid sequence, 576 residues long: Chaperonin CPN60-2, mitochondrial (576 aa).

The N-terminal 34 residues, 1–34 (MYRAAASLASKARQAGSSSAARQVGSRLAWSRNY), are a transit peptide targeting the mitochondrion.

This sequence belongs to the chaperonin (HSP60) family.

It is found in the mitochondrion. Its function is as follows. Implicated in mitochondrial protein import and macromolecular assembly. May facilitate the correct folding of imported proteins. May also prevent misfolding and promote the refolding and proper assembly of unfolded polypeptides generated under stress conditions in the mitochondrial matrix. The sequence is that of Chaperonin CPN60-2, mitochondrial (CPN60II) from Zea mays (Maize).